The chain runs to 199 residues: Recombination protein RecR (199 aa).

The C4-type zinc-finger motif lies at 59–74; the sequence is CLNCGNVGTSDICALC. Positions 82–176 constitute a Toprim domain; the sequence is GELCVVEDVA…KLTSLAQGVP (95 aa).

Belongs to the RecR family.

In terms of biological role, may play a role in DNA repair. It seems to be involved in an RecBC-independent recombinational process of DNA repair. It may act with RecF and RecO. This chain is Recombination protein RecR, found in Ruegeria sp. (strain TM1040) (Silicibacter sp.).